The chain runs to 836 residues: Ethylene receptor 3 (836 aa).

Helical transmembrane passes span 137-157 (LIAAAYFSIPLEILYFVAGLR), 166-186 (LVQFGAFIVLCGLTHLLTAFT), and 204-224 (LTALVSFLTAITLLTLIPQLL). Residues Cys-176 and His-180 each contribute to the Cu cation site. A GAF domain is found at 269 to 413 (DRHTVLYTTL…VVAGQVAVAL (145 aa)). Residues 416–452 (ATLLEESRAMRDRLAEQNRELLQARRDALMANEARQA) are a coiled coil. The Histidine kinase domain maps to 457–691 (MSQGMRRPIH…LVLRFQLQSP (235 aa)). One can recognise a Response regulatory domain in the interval 718 to 834 (LLIDDDDDIN…LKDELARILQ (117 aa)).

This sequence belongs to the ethylene receptor family. Requires Cu cation as cofactor.

The protein localises to the endoplasmic reticulum membrane. The catalysed reaction is ATP + protein L-histidine = ADP + protein N-phospho-L-histidine.. Its function is as follows. Ethylene receptor related to bacterial two-component regulators. Acts as a negative regulator of ethylene signaling. May delay the transition from the vegetative stage to the floral stage by up-regulating GI (GIGANTEA) and RCN1 and cause starch accumulation in stems by down-regulating the alpha-amylase AMY3D. This Oryza sativa subsp. japonica (Rice) protein is Ethylene receptor 3 (ETR3).